Here is a 224-residue protein sequence, read N- to C-terminus: Flagellar L-ring protein (224 aa).

The first 15 residues, 1-15 (MRSLLFSLTALVLAG), serve as a signal peptide directing secretion. Residue Cys-16 is the site of N-palmitoyl cysteine attachment. A lipid anchor (S-diacylglycerol cysteine) is attached at Cys-16.

It belongs to the FlgH family. As to quaternary structure, the basal body constitutes a major portion of the flagellar organelle and consists of four rings (L,P,S, and M) mounted on a central rod.

The protein localises to the cell outer membrane. It localises to the bacterial flagellum basal body. Functionally, assembles around the rod to form the L-ring and probably protects the motor/basal body from shearing forces during rotation. The sequence is that of Flagellar L-ring protein from Idiomarina loihiensis (strain ATCC BAA-735 / DSM 15497 / L2-TR).